A 437-amino-acid chain; its full sequence is Glutamyl-tRNA reductase (437 aa).

Residues 46–49 (TCNR), S97, 102–104 (EEQ), and Q108 contribute to the substrate site. The active-site Nucleophile is the C47. 177-182 (GAGEMG) contributes to the NADP(+) binding site. The interval 410 to 437 (NGRVSEGKDAKVEEGKPEVDVQRSKAES) is disordered. Positions 414–437 (SEGKDAKVEEGKPEVDVQRSKAES) are enriched in basic and acidic residues.

The protein belongs to the glutamyl-tRNA reductase family. Homodimer.

The enzyme catalyses (S)-4-amino-5-oxopentanoate + tRNA(Glu) + NADP(+) = L-glutamyl-tRNA(Glu) + NADPH + H(+). It functions in the pathway porphyrin-containing compound metabolism; protoporphyrin-IX biosynthesis; 5-aminolevulinate from L-glutamyl-tRNA(Glu): step 1/2. Functionally, catalyzes the NADPH-dependent reduction of glutamyl-tRNA(Glu) to glutamate 1-semialdehyde (GSA). The sequence is that of Glutamyl-tRNA reductase from Archaeoglobus fulgidus (strain ATCC 49558 / DSM 4304 / JCM 9628 / NBRC 100126 / VC-16).